A 358-amino-acid chain; its full sequence is Alanine racemase (358 aa).

Lysine 35 acts as the Proton acceptor; specific for D-alanine in catalysis. N6-(pyridoxal phosphate)lysine is present on lysine 35. Arginine 130 lines the substrate pocket. The Proton acceptor; specific for L-alanine role is filled by tyrosine 255. Position 303 (methionine 303) interacts with substrate.

This sequence belongs to the alanine racemase family. Requires pyridoxal 5'-phosphate as cofactor.

The enzyme catalyses L-alanine = D-alanine. The protein operates within amino-acid biosynthesis; D-alanine biosynthesis; D-alanine from L-alanine: step 1/1. Catalyzes the interconversion of L-alanine and D-alanine. May also act on other amino acids. The polypeptide is Alanine racemase (alr) (Shewanella piezotolerans (strain WP3 / JCM 13877)).